The sequence spans 601 residues: MENQAHTTAGASPCEAELQELMEQIDIMVSNKKLDWERKMRALETRLDLRDQELANAQTCLDQKGQEVGLLRQKLDSLEKCNLVMTQNYEGQLQTLKAQFSKLTNNFEKLRLHQMKQNQSHRKEASNKDETPFELSSLNQKIEEFRAKSREWDKQEILYQTHLVSLDAQQKLLSEKCNQFQKQAQNYQTQLNGKQQRPEDSSPETPRLVCESSPGCEATQRDEFIIEKLKSAVSEIALSRNKLQDENQKLLQELKMYQRQCQAMEAGLSEVKNELQSRDDLLRIIEMERLHLHRELLKMGELQTVQDNRKRVESSYSPSTKEPERKRKELFSVVSDQPNHEKELNKMRSQLYQEEDLCSEQERMRNEISELTQELHQKEVTIATIMKKAALLERQLKIELEIKEKMLAKQQISDRRYKAVRTENTHLKGMMGDLDPARYLTVDFSNKEHSRHTSINKLEYENERLRSDLAKLHINGKAAWSNQSSYEGAGAYIYQSQLKTETGGDRISEDCEMNRSPTPLSPLPFQTKEMTSPLAGDNEVLPLSPPDISFRASLAAQHFLMEEEKRAKELEKLLNTHIDELQRHTEFTLNKYTKLKQSRHI.

Coiled coils occupy residues 14-59 (CEAE…NAQT), 86-197 (TQNY…KQQR), and 226-278 (IEKL…LQSR). Disordered regions lie at residues 115 to 135 (MKQNQSHRKEASNKDETPFEL) and 188 to 213 (QTQLNGKQQRPEDSSPETPRLVCESS). The span at 121–131 (HRKEASNKDET) shows a compositional bias: basic and acidic residues. Residues 307–326 (DNRKRVESSYSPSTKEPERK) are disordered. Residues 340–397 (HEKELNKMRSQLYQEEDLCSEQERMRNEISELTQELHQKEVTIATIMKKAALLERQLK) are a coiled coil. The residue at position 544 (S544) is a Phosphoserine. Residues 555-586 (AAQHFLMEEEKRAKELEKLLNTHIDELQRHTE) adopt a coiled-coil conformation.

This sequence belongs to the CEP63 family. In terms of assembly, interacts with CEP152; the interaction is mutually exclusive with CEP63.

The protein resides in the cytoplasm. Key structural component of the deuterosome, a structure that promotes de novo centriole amplification in multiciliated cells. Deuterosome-mediated centriole amplification occurs in terminally differentiated multiciliated cells and can generate more than 100 centrioles. Probably sufficient for the specification and formation of the deuterosome inner core. Interacts with CEP152 and recruits PLK4 to activate centriole biogenesis. This Rattus norvegicus (Rat) protein is Deuterosome assembly protein 1.